A 1505-amino-acid chain; its full sequence is MPHFPNLPLPEAAAAAAHAALLALALLLLLLRSARALASRCASCLKTAPRRAAAVDGGLAAASSVGAWYRAALACCGYALLAQVAALSYEVAVAGSHVAVEALLLPAVQALAWAALLALAMQARAVGWGRFPVLVRVWWVVSFVLCVGIAYDDTRHLMGDDDDDEVDYAHMVANFASAPALGFLCLVGVMGSTGVELEFTDDDSSVHEPLLLGGQRRDADEEPGCLRVTPYGDAGIVSLATLSWLSPLLSVGAQRPLELADIPLMAHKDRAKSCYKAMSSHYERQRMERPGSEPSLAWAILKSFWREAAINGAFAAVNTIVSYVGPYLISYFVDYLSGKIEFPHEGYILASVFFVAKLLETLTARQWYLGVDVMGIHVKSGLTAMVYRKGLRLSNSSRQSHTSGEIVNYMAVDVQRVGDYAWYFHDIWMLPLQIILALAILYKNVGIAMVSTLVATVLSIAASVPVAKLQEHYQDKLMASKDERMRKTSECLKNMRILKLQAWEDRYRLKLEEMRNVECKWLRWALYSQAAVTFVFWSSPIFVAVITFGTCILLGGELTAGGVLSALATFRILQEPLRNFPDLISMIAQTRVSLDRLSHFLQQEELPDDATITVPHGSTDKAININDATFSWNPSSPTPTLSGINLSVVRGMRVAVCGVIGSGKSSLLSSILGEIPKLCGQVRISGSAAYVPQTAWIQSGNIEENILFGSPMDKQRYKRVIEACSLKKDLQLLQYGDQTIIGDRGINLSGGQKQRVQLARALYQDADIYLLDDPFSAVDAHTGSELFREYILTALASKTVIYVTHQIEFLPAADLILVLKDGHITQAGKYDDLLQAGTDFNALVCAHKEAIETMEFSEDSDEDTVSSVPIKRLTPSVSNIDNLKNKVSNNEKPSSTRGIKEKKKKPEERKKKRSVQEEERERGRVSLQVYLSYMGEAYKGTLIPLIILAQTMFQVLQIASNWWMAWANPQTEGDAPKTDSVVLLVVYMSLAFGSSLFVFVRSLLVATFGLATAQKLFVKMLRCVFRAPMSFFDTTPSGRILNRVSVDQSVVDLDIAFRLGGFASTTIQLLGIVAVMSKVTWQVLILIVPMAVACMWMQRYYIASSRELTRILSVQKSPVIHLFSESIAGAATIRGFGQEKRFMKRNLYLLDCFARPLFSSLAAIEWLCLRMELLSTFVFAFCMAILVSFPPGTIEPSMAGLAVTYGLNLNARMSRWILSFCKLENRIISVERIYQYCKLPSEAPLIIENSRPSSSWPENGNIELVDLKVRYKDDLPLVLHGISCIFPGGKKIGIVGRTGSGKSTLIQALFRLIEPTGGKVIIDDVDISRIGLHDLRSRLSIIPQDPTLFEGTIRMNLDPLEECTDQEIWEALEKCQLGEVIRSKDEKLDSPVLENGDNWSVGQRQLIALGRALLKQAKILVLDEATASVDTATDNLIQKIIRSEFKDCTVCTIAHRIPTVIDSDLVLVLSDGKIAEFDTPQRLLEDKSSMFMQLVSEYSTRSSCI.

Helical transmembrane passes span 11 to 31 (EAAA…LLLL), 54 to 68 (AVDG…VGAW), 71 to 91 (AALA…SYEV), 102 to 122 (ALLL…LAMQ), 131 to 151 (FPVL…GIAY), 171 to 191 (MVAN…GVMG), 313 to 333 (AFAA…SYFV), 336 to 356 (LSGK…FFVA), 367 to 387 (WYLG…AMVY), 421 to 441 (AWYF…LAIL), 447 to 467 (IAMV…VPVA), and 534 to 554 (FVFW…CILL). Positions 314–589 (FAAVNTIVSY…FPDLISMIAQ (276 aa)) constitute an ABC transmembrane type-1 1 domain. The region spanning 623 to 846 (ININDATFSW…GTDFNALVCA (224 aa)) is the ABC transporter 1 domain. 658 to 665 (GVIGSGKS) is a binding site for ATP. Polar residues predominate over residues 881 to 897 (DNLKNKVSNNEKPSSTR). The segment at 881 to 919 (DNLKNKVSNNEKPSSTRGIKEKKKKPEERKKKRSVQEEE) is disordered. Residues 904–919 (KKPEERKKKRSVQEEE) show a composition bias toward basic and acidic residues. The next 6 membrane-spanning stretches (helical) occupy residues 940–960 (GTLI…QIAS), 980–1000 (SVVL…FVFV), 1055–1077 (IAFR…AVMS), 1081–1103 (WQVL…YYIA), 1149–1169 (LLDC…WLCL), and 1174–1194 (LSTF…PGTI). One can recognise an ABC transmembrane type-1 2 domain in the interval 945–1215 (LIILAQTMFQ…GLNLNARMSR (271 aa)). The 235-residue stretch at 1262–1496 (IELVDLKVRY…KSSMFMQLVS (235 aa)) folds into the ABC transporter 2 domain. Position 1296–1303 (1296–1303 (GRTGSGKS)) interacts with ATP.

This sequence belongs to the ABC transporter superfamily. ABCC family. Conjugate transporter (TC 3.A.1.208) subfamily.

Its subcellular location is the membrane. ABC transporter that may affect phytic acid transport and compartmentalization. May function directly or indirectly in removing phytic acid from the cytosol or in vesicle trafficking. Required for phytic acid accumulation in developing seeds. Phytic acid is the primary storage form of phosphorus in cereal grains and other plant seeds. This is ABC transporter C family member 13 from Oryza sativa subsp. indica (Rice).